We begin with the raw amino-acid sequence, 358 residues long: Forkhead box protein I1c (358 aa).

Positions 1 to 13 (MNSIHLPSHQRTS) are enriched in polar residues. Disordered stretches follow at residues 1-25 (MNSI…PKGA) and 191-255 (DNGN…PSGI). The segment at residues 106 to 200 (RPPYSYSALI…DNGNFRRKRK (95 aa)) is a DNA-binding region (fork-head).

It localises to the nucleus. In terms of biological role, probable transcription factor. The polypeptide is Forkhead box protein I1c (Xenopus tropicalis (Western clawed frog)).